The sequence spans 435 residues: ATP-dependent RNA helicase RhlB (435 aa).

The short motif at 9-37 (QKFADFSLQTEIKTALNESGFEYCTPIQA) is the Q motif element. The Helicase ATP-binding domain maps to 40 to 219 (LPILLQKKDI…YDHMNEPEKV (180 aa)). An ATP-binding site is contributed by 53–60 (AQTGTGKT). The DEAD box signature appears at 165–168 (DEAD). Positions 243 to 390 (KMRLLLTLLE…VTNYDSEALL (148 aa)) constitute a Helicase C-terminal domain. Residues 395–435 (APVRVHRKHNSRPQGRSGSGGKPRSGNRNAPRRHDKTRRHS) form a disordered region. Basic residues predominate over residues 424-435 (APRRHDKTRRHS).

The protein belongs to the DEAD box helicase family. RhlB subfamily. Component of the RNA degradosome, which is a multiprotein complex involved in RNA processing and mRNA degradation.

Its subcellular location is the cytoplasm. It catalyses the reaction ATP + H2O = ADP + phosphate + H(+). Functionally, DEAD-box RNA helicase involved in RNA degradation. Has RNA-dependent ATPase activity and unwinds double-stranded RNA. This chain is ATP-dependent RNA helicase RhlB, found in Shewanella sediminis (strain HAW-EB3).